The following is a 649-amino-acid chain: Macrolide export ATP-binding/permease protein MacB 1 (649 aa).

The region spanning 5–243 (LELEGIRRSY…AAAELMSLTP (239 aa)) is the ABC transporter domain. 41–48 (GASGSGKS) provides a ligand contact to ATP. A run of 5 helical transmembrane segments spans residues 274–294 (ALTMLGIIIGIASVVSILVVG), 420–440 (VVGQVILVGNMPATVVGVVAE), 524–544 (LFLTLVAVISLVVGGIGVMNI), 578–598 (VLVCLIGGALGISLSFAIGLI), and 608–628 (IAFPPMALFSAFLCSTVIGVV).

The protein belongs to the ABC transporter superfamily. Macrolide exporter (TC 3.A.1.122) family. In terms of assembly, homodimer. Part of the tripartite efflux system MacAB-TolC, which is composed of an inner membrane transporter, MacB, a periplasmic membrane fusion protein, MacA, and an outer membrane component, TolC. The complex forms a large protein conduit and can translocate molecules across both the inner and outer membranes. Interacts with MacA.

It is found in the cell inner membrane. Functionally, part of the tripartite efflux system MacAB-TolC. MacB is a non-canonical ABC transporter that contains transmembrane domains (TMD), which form a pore in the inner membrane, and an ATP-binding domain (NBD), which is responsible for energy generation. Confers resistance against macrolides. The sequence is that of Macrolide export ATP-binding/permease protein MacB 1 from Yersinia pestis bv. Antiqua (strain Antiqua).